The chain runs to 254 residues: Insulin-like growth factor-binding protein 4 (254 aa).

The first 21 residues, 1 to 21 (MLPFGLVAALLLAAGPRPSLG), serve as a signal peptide directing secretion. One can recognise an IGFBP N-terminal domain in the interval 23-103 (EAIHCPPCSE…MHGQGVCTEL (81 aa)). 6 disulfides stabilise this stretch: cysteine 27-cysteine 53, cysteine 30-cysteine 55, cysteine 38-cysteine 56, cysteine 44-cysteine 59, cysteine 67-cysteine 80, and cysteine 74-cysteine 100. A glycan (N-linked (GlcNAc...) asparagine) is linked at asparagine 125. 4 cysteine pairs are disulfide-bonded: cysteine 131-cysteine 138, cysteine 170-cysteine 200, cysteine 211-cysteine 222, and cysteine 224-cysteine 245. Positions 167-245 (QGSCQSELHR…GLEPKGELDC (79 aa)) constitute a Thyroglobulin type-1 domain. Residue serine 251 is modified to Phosphoserine.

As to quaternary structure, binds IGF2 more than IGF1.

It is found in the secreted. In terms of biological role, IGF-binding proteins prolong the half-life of the IGFs and have been shown to either inhibit or stimulate the growth promoting effects of the IGFs on cell culture. They alter the interaction of IGFs with their cell surface receptors. The chain is Insulin-like growth factor-binding protein 4 (Igfbp4) from Mus musculus (Mouse).